Consider the following 481-residue polypeptide: Glutamyl-tRNA(Gln) amidotransferase subunit A (481 aa).

Residues lysine 75 and serine 150 each act as charge relay system in the active site. Residue serine 174 is the Acyl-ester intermediate of the active site.

This sequence belongs to the amidase family. GatA subfamily. Heterotrimer of A, B and C subunits.

It carries out the reaction L-glutamyl-tRNA(Gln) + L-glutamine + ATP + H2O = L-glutaminyl-tRNA(Gln) + L-glutamate + ADP + phosphate + H(+). Its function is as follows. Allows the formation of correctly charged Gln-tRNA(Gln) through the transamidation of misacylated Glu-tRNA(Gln) in organisms which lack glutaminyl-tRNA synthetase. The reaction takes place in the presence of glutamine and ATP through an activated gamma-phospho-Glu-tRNA(Gln). This Macrococcus caseolyticus (strain JCSC5402) (Macrococcoides caseolyticum) protein is Glutamyl-tRNA(Gln) amidotransferase subunit A.